Consider the following 644-residue polypeptide: ATP-dependent zinc metalloprotease FtsH (644 aa).

The Stromal segment spans residues 1 to 11 (MNDNKNNTVRN). Residues 12-32 (LLIGIALLSGISLTAKKFDLI) form a helical membrane-spanning segment. Over 33–128 (GVQGSESGKN…FDAHPAEQKN (96 aa)) the chain is Lumenal. A helical transmembrane segment spans residues 129–149 (IFVNILSNILLPIIFITGLVY). Residues 150–644 (LFQNSENFGG…KNIPYVSKFN (495 aa)) lie on the Stromal side of the membrane. 226–233 (GPPGTGKT) contacts ATP. His-447 contacts Zn(2+). Glu-448 is a catalytic residue. The Zn(2+) site is built by His-451 and Asp-525.

This sequence in the central section; belongs to the AAA ATPase family. In the C-terminal section; belongs to the peptidase M41 family. In terms of assembly, homohexamer. Zn(2+) is required as a cofactor.

Its subcellular location is the plastid. It is found in the chloroplast thylakoid membrane. In terms of biological role, acts as a processive, ATP-dependent zinc metallopeptidase. The protein is ATP-dependent zinc metalloprotease FtsH of Trieres chinensis (Marine centric diatom).